The primary structure comprises 426 residues: Monocarboxylate transporter 13 (426 aa).

Over methionine 1–glycine 10 the chain is Cytoplasmic. Helical transmembrane passes span glycine 11–leucine 31, valine 52–alanine 72, valine 83–leucine 103, leucine 106–leucine 126, leucine 139–phenylalanine 159, leucine 172–leucine 192, valine 221–leucine 241, leucine 244–valine 264, leucine 283–alanine 303, glycine 306–phenylalanine 326, isoleucine 338–proline 358, and phenylalanine 374–phenylalanine 394. The Cytoplasmic portion of the chain corresponds to phenylalanine 395–aspartate 426.

Belongs to the major facilitator superfamily. Monocarboxylate porter (TC 2.A.1.13) family.

It localises to the golgi apparatus membrane. The protein resides in the cell membrane. In terms of biological role, proton-linked monocarboxylate transporter. May catalyze the transport of monocarboxylates across the plasma membrane. This Bos taurus (Bovine) protein is Monocarboxylate transporter 13 (SLC16A13).